Reading from the N-terminus, the 649-residue chain is Protein teflon (649 aa).

A C2H2-type 1 zinc finger spans residues L33–H56. The disordered stretch occupies residues E78–Q126. Over residues S88–S104 the composition is skewed to low complexity. C2H2-type zinc fingers lie at residues Y599 to H621 and F625 to H648.

The protein belongs to the Teflon family. As to expression, expressed at a low level in a variety of tissues, highest expression is in testis.

It localises to the nucleus. The protein resides in the chromosome. In terms of biological role, specifically required in males for proper segregation of autosomal bivalents at meiosis I. Expression is required in the male germ line prior to spermatocyte stage S4. May have a role as a bridging molecule maintaining adhesion to hold autosome bivalents together via heterochromatic connections. In Drosophila melanogaster (Fruit fly), this protein is Protein teflon.